A 237-amino-acid polypeptide reads, in one-letter code: tRNA (guanine-N(7)-)-methyltransferase (237 aa).

Residues E67, E92, D119, and D141 each contribute to the S-adenosyl-L-methionine site. The active site involves D141. Residues K145, D177, and 214 to 217 each bind substrate; that span reads TRYE.

It belongs to the class I-like SAM-binding methyltransferase superfamily. TrmB family.

The enzyme catalyses guanosine(46) in tRNA + S-adenosyl-L-methionine = N(7)-methylguanosine(46) in tRNA + S-adenosyl-L-homocysteine. Its pathway is tRNA modification; N(7)-methylguanine-tRNA biosynthesis. In terms of biological role, catalyzes the formation of N(7)-methylguanine at position 46 (m7G46) in tRNA. In Ruegeria pomeroyi (strain ATCC 700808 / DSM 15171 / DSS-3) (Silicibacter pomeroyi), this protein is tRNA (guanine-N(7)-)-methyltransferase.